The following is a 266-amino-acid chain: Hydroxyethylthiazole kinase (266 aa).

Met-43 is a binding site for substrate. Arg-119 and Thr-166 together coordinate ATP. Gly-193 lines the substrate pocket.

It belongs to the Thz kinase family. Mg(2+) is required as a cofactor.

It carries out the reaction 5-(2-hydroxyethyl)-4-methylthiazole + ATP = 4-methyl-5-(2-phosphooxyethyl)-thiazole + ADP + H(+). It functions in the pathway cofactor biosynthesis; thiamine diphosphate biosynthesis; 4-methyl-5-(2-phosphoethyl)-thiazole from 5-(2-hydroxyethyl)-4-methylthiazole: step 1/1. Catalyzes the phosphorylation of the hydroxyl group of 4-methyl-5-beta-hydroxyethylthiazole (THZ). The chain is Hydroxyethylthiazole kinase from Methanococcus maripaludis (strain DSM 14266 / JCM 13030 / NBRC 101832 / S2 / LL).